A 482-amino-acid polypeptide reads, in one-letter code: Proton extrusion protein PxcA (482 aa).

4 consecutive transmembrane segments (helical) span residues 265-285 (FVLG…NLVI), 359-379 (PLKN…YFVL), 406-426 (IIIL…WEVI), and 442-462 (FINM…KYWI).

The protein belongs to the CemA family.

Its subcellular location is the cell inner membrane. In terms of biological role, required for H(+) efflux immediately after light irradiation to form a rapid H(+) concentration gradient across the thylakoid membranes. Together with PxcL, contributes to transient H(+) uptake following dark to light transition. This is Proton extrusion protein PxcA from Acaryochloris marina (strain MBIC 11017).